The sequence spans 368 residues: MAKKRVGIIFGGKSAEHEVSLQSAKNIVEAIDKDRFDVTLIGIDKQGQWHINEASNFLLNADNPALIELNKSNQGVALIPGKEDRQLVGTANQSVLDQLDVVFPIVHGTLGEDGSLQGMFRLANLPFVGSNVLGSAVSMDKDIAKRLLQGAGLHVASGLTFTRAAKETIDFESIADQLGLPLFIKPANQGSSVGVNKATTEAEFTAAIEEAFSYDHKVLIEAAIKGREIECAVLGNDYPKASTCGEILPQDGFYSYDAKYIDEDGAKLAIPADLPEDVNRRIQDIAIQAYKTLNCEGLARVDVFLTETGEVIINEVNTLPGFTKISMYPKLWEASGVSYQDLITTLIELAIERHERDKQLKSSVFDRN.

The region spanning 145–348 is the ATP-grasp domain; it reads KRLLQGAGLH…YQDLITTLIE (204 aa). Residue 175–230 coordinates ATP; sequence ADQLGLPLFIKPANQGSSVGVNKATTEAEFTAAIEEAFSYDHKVLIEAAIKGREIE. 3 residues coordinate Mg(2+): aspartate 302, glutamate 315, and asparagine 317.

Belongs to the D-alanine--D-alanine ligase family. It depends on Mg(2+) as a cofactor. Mn(2+) serves as cofactor.

It localises to the cytoplasm. The catalysed reaction is 2 D-alanine + ATP = D-alanyl-D-alanine + ADP + phosphate + H(+). The protein operates within cell wall biogenesis; peptidoglycan biosynthesis. Its function is as follows. Cell wall formation. The polypeptide is D-alanine--D-alanine ligase (Shouchella clausii (strain KSM-K16) (Alkalihalobacillus clausii)).